The following is an 88-amino-acid chain: Small ribosomal subunit protein uS17 (88 aa).

Belongs to the universal ribosomal protein uS17 family. As to quaternary structure, part of the 30S ribosomal subunit.

Its function is as follows. One of the primary rRNA binding proteins, it binds specifically to the 5'-end of 16S ribosomal RNA. The sequence is that of Small ribosomal subunit protein uS17 from Teredinibacter turnerae (strain ATCC 39867 / T7901).